Consider the following 603-residue polypeptide: MSSEHIQNKLALLPDQPGCYLMKDRQGTIIYVGKAKVLKNRVRSYFSGTHDSKTQRLVQEIVDFEYIVTSSNVEALLLEINLIKKHDPRFNIRLKDDKTYPFIKITNERHPRLIITRQVKKDKGKYFGPYPNVYAANEVKRILDRLYPLRKCSTLPNKVCLYYHLGQCLAPCVFDVEASKYKEMQDEIVAFLNGGYKTVKNDLMKKMQVAAENMEFEKAGEFRDQINAIETTMEKQKMTMNDFVDRDVFGYAIDKGWMCVQVFFIRQGKLIERDVSQFPFYNDADEDFLTFIGQFYQKANHIPPKEIYLPDDVDSEAVQAVVPDTKIIVPQRGNKKELVKLAYKNAKIALNEKFMLLERNEERTVGAVERLGEAMGIPTPSRVEAFDNSNIHGTDPVSAMVTFLDGKPSKNDYRKYKIKTVEGPDDYATMREVIRRRYWRVLKERLPMPDLILIDGGKGQIDSAKDVLINELGLDIPVAGLAKDDKHRTSQLLFGDPLEIVPLERNSQEFYLLQRMQDEVHRFAITFHRQLRSKTGFQSILDGIPGVGPGRKKKLLKHFGSMKKLKEASVEEIKEAGVPMNVAEEVHKHITTFNEKAKNTEQK.

The GIY-YIG domain maps to 15–92 (DQPGCYLMKD…IKKHDPRFNI (78 aa)). Positions 197 to 232 (KTVKNDLMKKMQVAAENMEFEKAGEFRDQINAIETT) constitute a UVR domain.

This sequence belongs to the UvrC family. As to quaternary structure, interacts with UvrB in an incision complex.

It is found in the cytoplasm. In terms of biological role, the UvrABC repair system catalyzes the recognition and processing of DNA lesions. UvrC both incises the 5' and 3' sides of the lesion. The N-terminal half is responsible for the 3' incision and the C-terminal half is responsible for the 5' incision. The protein is UvrABC system protein C of Listeria welshimeri serovar 6b (strain ATCC 35897 / DSM 20650 / CCUG 15529 / CIP 8149 / NCTC 11857 / SLCC 5334 / V8).